The primary structure comprises 131 residues: Glycine cleavage system H protein (131 aa).

Residues Thr-24–Glu-106 form the Lipoyl-binding domain. An N6-lipoyllysine modification is found at Lys-65.

The protein belongs to the GcvH family. As to quaternary structure, the glycine cleavage system is composed of four proteins: P, T, L and H. (R)-lipoate serves as cofactor.

In terms of biological role, the glycine cleavage system catalyzes the degradation of glycine. The H protein shuttles the methylamine group of glycine from the P protein to the T protein. This chain is Glycine cleavage system H protein, found in Mycobacteroides abscessus (strain ATCC 19977 / DSM 44196 / CCUG 20993 / CIP 104536 / JCM 13569 / NCTC 13031 / TMC 1543 / L948) (Mycobacterium abscessus).